Reading from the N-terminus, the 989-residue chain is ATP-dependent 6-phosphofructokinase subunit alpha (989 aa).

An N-terminal catalytic PFK domain 1 region spans residues 1–585; it reads MPEPSISDLS…SYENFLSVSK (585 aa). ATP-binding positions include G220, 283 to 284, and 313 to 316; these read RC and GDGS. Residue D314 participates in Mg(2+) binding. Residues 359 to 361, R396, 403 to 405, E460, R487, and 493 to 496 each bind beta-D-fructose 6-phosphate; these read SID, MGR, and HVQR. The Proton acceptor role is filled by D361. Residues 586–599 are interdomain linker; sequence YDDGSYLVPESSRL. The interval 600–989 is C-terminal regulatory PFK domain 2; that stretch reads NIAIIHVGAP…LSGRLSIRTT (390 aa). Residues R670, 727–731, R765, 772–774, E832, R858, 864–867, and R963 contribute to the beta-D-fructose 2,6-bisphosphate site; these read TVSNN, QGG, and HVQQ.

The protein belongs to the phosphofructokinase type A (PFKA) family. ATP-dependent PFK group I subfamily. Eukaryotic two domain clade 'E' sub-subfamily. In terms of assembly, heterododecamer of 4 alpha, 4 beta and 4 gamma chains. It depends on Mg(2+) as a cofactor.

It localises to the cytoplasm. It carries out the reaction beta-D-fructose 6-phosphate + ATP = beta-D-fructose 1,6-bisphosphate + ADP + H(+). It participates in carbohydrate degradation; glycolysis; D-glyceraldehyde 3-phosphate and glycerone phosphate from D-glucose: step 3/4. Its activity is regulated as follows. Allosterically activated by ADP, AMP, or fructose 2,6-bisphosphate, and allosterically inhibited by ATP or citrate. In terms of biological role, catalyzes the phosphorylation of D-fructose 6-phosphate to fructose 1,6-bisphosphate by ATP, the first committing step of glycolysis. This Komagataella pastoris (Yeast) protein is ATP-dependent 6-phosphofructokinase subunit alpha (PFK1).